A 116-amino-acid polypeptide reads, in one-letter code: Large ribosomal subunit protein uL18 (116 aa).

This sequence belongs to the universal ribosomal protein uL18 family. Part of the 50S ribosomal subunit; part of the 5S rRNA/L5/L18/L25 subcomplex. Contacts the 5S and 23S rRNAs.

In terms of biological role, this is one of the proteins that bind and probably mediate the attachment of the 5S RNA into the large ribosomal subunit, where it forms part of the central protuberance. The chain is Large ribosomal subunit protein uL18 from Pseudomonas syringae pv. tomato (strain ATCC BAA-871 / DC3000).